The chain runs to 152 residues: Ribosome maturation factor RimP (152 aa).

It belongs to the RimP family.

Its subcellular location is the cytoplasm. Functionally, required for maturation of 30S ribosomal subunits. The sequence is that of Ribosome maturation factor RimP from Desulfitobacterium hafniense (strain DSM 10664 / DCB-2).